A 314-amino-acid chain; its full sequence is ATP synthase gamma chain (314 aa).

This sequence belongs to the ATPase gamma chain family. F-type ATPases have 2 components, CF(1) - the catalytic core - and CF(0) - the membrane proton channel. CF(1) has five subunits: alpha(3), beta(3), gamma(1), delta(1), epsilon(1). CF(0) has three main subunits: a, b and c.

The protein resides in the cellular thylakoid membrane. Produces ATP from ADP in the presence of a proton gradient across the membrane. The gamma chain is believed to be important in regulating ATPase activity and the flow of protons through the CF(0) complex. The polypeptide is ATP synthase gamma chain (Gloeothece citriformis (strain PCC 7424) (Cyanothece sp. (strain PCC 7424))).